A 504-amino-acid chain; its full sequence is Anaerobic nitric oxide reductase transcription regulator NorR (504 aa).

D57 carries the 4-aspartylphosphate modification. A Sigma-54 factor interaction domain is found at 187-416 (MIGLSPGMMQ…LEHAIHRAVV (230 aa)). ATP contacts are provided by residues 215 to 222 (GETGTGKE) and 278 to 287 (ADNGTLFLDE). Positions 479 to 498 (WAACARALEMDVANLHRLAK) form a DNA-binding region, H-T-H motif.

It functions in the pathway nitrogen metabolism; nitric oxide reduction. Functionally, required for the expression of anaerobic nitric oxide (NO) reductase, acts as a transcriptional activator for at least the norVW operon. Activation also requires sigma-54. In Enterobacter sp. (strain 638), this protein is Anaerobic nitric oxide reductase transcription regulator NorR.